The chain runs to 450 residues: Neutral protease 2 homolog AFUB_070680 (450 aa).

An N-terminal signal peptide occupies residues 1 to 19 (MKITALASAILAVAQGALA). A propeptide spanning residues 20 to 172 (LPARAPALDI…PASIKPLDRR (153 aa)) is cleaved from the precursor. Disulfide bonds link Cys179–Cys251 and Cys258–Cys276. Position 300 (His300) interacts with Zn(2+). Residue Glu301 is part of the active site. 2 residues coordinate Zn(2+): His304 and Asp315. The span at 364 to 392 (QPGQTEPGTQTMWDGYSQPGQTEPGTQTM) shows a compositional bias: polar residues. Positions 364–416 (QPGQTEPGTQTMWDGYSQPGQTEPGTQTMWDGYSQPGQTEPGTQTTWDGYSQP) are disordered. Residues 398–409 (QPGQTEPGTQTT) are compositionally biased toward low complexity.

The protein belongs to the peptidase M35 family. It depends on Zn(2+) as a cofactor.

Its subcellular location is the secreted. The enzyme catalyses Preferential cleavage of bonds with hydrophobic residues in P1'. Also 3-Asn-|-Gln-4 and 8-Gly-|-Ser-9 bonds in insulin B chain.. Functionally, secreted metalloproteinase that allows assimilation of proteinaceous substrates. Shows high activities on basic nuclear substrates such as histone and protamine. May be involved in virulence. The sequence is that of Neutral protease 2 homolog AFUB_070680 from Aspergillus fumigatus (strain ATCC MYA-4609 / CBS 101355 / FGSC A1100 / Af293) (Neosartorya fumigata).